The sequence spans 1883 residues: Lysophospholipase NTE1 (1883 aa).

Topologically, residues 1–75 (MSQVPVASPA…LLRVVLASLN (75 aa)) are cytoplasmic. A helical transmembrane segment spans residues 76-96 (LIRILATFSTITVPSLVYAIL). The Lumenal portion of the chain corresponds to 97 to 103 (HYSLTLQ). Residues 104–124 (LNFPSLALLFLTSLISAFIWL) form a helical membrane-spanning segment. Topologically, residues 125–1883 (RYRHLNKYER…AGISARRNSI (1759 aa)) are cytoplasmic. 6 disordered regions span residues 284–327 (HLAP…FNPP), 355–410 (ERLG…LYHA), 618–693 (SQRS…MVGP), 716–764 (SAQP…RKGS), 921–1069 (EEDR…ATNS), and 1084–1108 (LHQQ…GKRS). Polar residues predominate over residues 311–327 (NNATAPTSPYSSAFNPP). Positions 372–383 (ARTASSGTASAT) are enriched in low complexity. A compositionally biased stretch (polar residues) spans 650-668 (PSLTTSSKQSNQKPTSSRI). A nucleoside 3',5'-cyclic phosphate is bound by residues 863–1158 (AGHG…RRPI) and 1166–1285 (RLLS…IARR). The span at 936 to 948 (TDASSGSSRQNRP) shows a compositional bias: polar residues. Over residues 964-974 (LLDERNLREAD) the composition is skewed to basic and acidic residues. Composition is skewed to polar residues over residues 988-998 (ISSNGDGNSGS) and 1084-1100 (LHQQ…QSSQ). The PNPLA domain maps to 1544 to 1708 (LVLGGGGARG…VDNLPVTVML (165 aa)). Residues 1548-1553 (GGGARG) carry the GXGXXG motif. Residues 1575 to 1579 (GTSIG) carry the GXSXG motif. Catalysis depends on Ser-1577, which acts as the Nucleophile. The Proton acceptor role is filled by Asp-1695. The short motif at 1695–1697 (DGG) is the DGA/G element. Positions 1852-1883 (DESGVGGGVRKIRKKRRRTRRKAGISARRNSI) are disordered. The segment covering 1861-1874 (RKIRKKRRRTRRKA) has biased composition (basic residues).

It belongs to the NTE family.

It is found in the endoplasmic reticulum membrane. It catalyses the reaction a 1-acyl-sn-glycero-3-phosphocholine + H2O = sn-glycerol 3-phosphocholine + a fatty acid + H(+). Its activity is regulated as follows. Inhibited by organophosphorus esters. Functionally, intracellular phospholipase B that catalyzes the double deacylation of phosphatidylcholine (PC) to glycerophosphocholine (GroPCho). Plays an important role in membrane lipid homeostasis. Responsible for the rapid PC turnover in response to inositol, elevated temperatures, or when choline is present in the growth medium. The polypeptide is Lysophospholipase NTE1 (NTE1) (Mycosarcoma maydis (Corn smut fungus)).